Here is a 242-residue protein sequence, read N- to C-terminus: ATP synthase subunit a (242 aa).

The next 6 membrane-spanning stretches (helical) occupy residues 31–51 (IYMLLASILALTYFYLAFYNW), 84–104 (FIPLFFSLFIFILFCNLLGMT), 114–134 (IIVTFALAILVFLTITIVGFV), 140–160 (FLTLFLPHGTPLWLAPLMIVI), 189–209 (VIASFTISLMIYLKFISIPLM), and 210–230 (VILIGFEIFIAVLQAYIFTIL).

It belongs to the ATPase A chain family. As to quaternary structure, F-type ATPases have 2 components, CF(1) - the catalytic core - and CF(0) - the membrane proton channel. CF(1) has five subunits: alpha(3), beta(3), gamma(1), delta(1), epsilon(1). CF(0) has three main subunits: a(1), b(2) and c(9-12). The alpha and beta chains form an alternating ring which encloses part of the gamma chain. CF(1) is attached to CF(0) by a central stalk formed by the gamma and epsilon chains, while a peripheral stalk is formed by the delta and b chains.

Its subcellular location is the cell inner membrane. Functionally, key component of the proton channel; it plays a direct role in the translocation of protons across the membrane. The sequence is that of ATP synthase subunit a from Rickettsia canadensis (strain McKiel).